Here is a 653-residue protein sequence, read N- to C-terminus: Fructose-1,6-bisphosphatase class 3 2 (653 aa).

The protein belongs to the FBPase class 3 family. Mn(2+) serves as cofactor.

The catalysed reaction is beta-D-fructose 1,6-bisphosphate + H2O = beta-D-fructose 6-phosphate + phosphate. Its pathway is carbohydrate biosynthesis; gluconeogenesis. This Clostridium beijerinckii (strain ATCC 51743 / NCIMB 8052) (Clostridium acetobutylicum) protein is Fructose-1,6-bisphosphatase class 3 2.